A 166-amino-acid polypeptide reads, in one-letter code: Protein FAM163B (166 aa).

The helical transmembrane segment at 6-26 (VVITGGILATVILLCIIAVLC) threads the bilayer. Ser-40 carries the phosphoserine modification.

Belongs to the FAM163 family.

It localises to the membrane. This is Protein FAM163B (FAM163B) from Homo sapiens (Human).